We begin with the raw amino-acid sequence, 824 residues long: Ent-copalyl diphosphate synthase AN1, chloroplastic (824 aa).

The N-terminal 63 residues, 1-63, are a transit peptide targeting the chloroplast; it reads MPYPHPYPWQ…SSAKVFQTSR (63 aa). The segment at 1 to 87 is disordered; sequence MPYPHPYPWQ…QDLEDEHQAE (87 aa). Over residues 44-63 the composition is skewed to polar residues; sequence ATTTQQPDNVSSAKVFQTSR. Lys-247 contacts substrate. 2 residues coordinate Mg(2+): Asp-379 and Asp-381. The DXDD motif signature appears at 379–382; that stretch reads DVDD. Lys-465 is a substrate binding site.

The protein belongs to the terpene synthase family. Tpsc subfamily. The cofactor is Mg(2+).

The protein resides in the plastid. The protein localises to the chloroplast. The catalysed reaction is (2E,6E,10E)-geranylgeranyl diphosphate = ent-copalyl diphosphate. The protein operates within plant hormone biosynthesis; gibberellin biosynthesis. In terms of biological role, involved in giberellin biosynthesis. Catalyzes the conversion of geranylgeranyl diphosphate to the gibberellin precursor ent-copalyl diphosphate. The protein is Ent-copalyl diphosphate synthase AN1, chloroplastic of Zea mays (Maize).